Consider the following 357-residue polypeptide: Probable GTP 3',8-cyclase (357 aa).

Residues 5–234 (DFGRDVSGVR…DRRRYWVSSR (230 aa)) form the Radical SAM core domain. Residue Arg14 coordinates GTP. 2 residues coordinate [4Fe-4S] cluster: Cys21 and Cys25. S-adenosyl-L-methionine is bound at residue Tyr27. Cys28 is a [4Fe-4S] cluster binding site. Residue Lys68 participates in GTP binding. S-adenosyl-L-methionine is bound at residue Gly72. GTP is bound at residue Thr96. Ser120 contacts S-adenosyl-L-methionine. Lys157 serves as a coordination point for GTP. A disordered region spans residues 232 to 256 (SSRDAGSTADDAAQSVTPDGGAHPD). Residues Cys272 and Cys275 each contribute to the [4Fe-4S] cluster site. 277–279 (RVR) is a GTP binding site. Cys289 provides a ligand contact to [4Fe-4S] cluster.

This sequence belongs to the radical SAM superfamily. MoaA family. Requires [4Fe-4S] cluster as cofactor.

It catalyses the reaction GTP + AH2 + S-adenosyl-L-methionine = (8S)-3',8-cyclo-7,8-dihydroguanosine 5'-triphosphate + 5'-deoxyadenosine + L-methionine + A + H(+). It participates in cofactor biosynthesis; molybdopterin biosynthesis. Its function is as follows. Catalyzes the cyclization of GTP to (8S)-3',8-cyclo-7,8-dihydroguanosine 5'-triphosphate. The protein is Probable GTP 3',8-cyclase of Halobacterium salinarum (strain ATCC 29341 / DSM 671 / R1).